Reading from the N-terminus, the 847-residue chain is E4 SUMO-protein ligase PIAL1 (847 aa).

Positions 113-271 are interacting domain (IND), required for interaction with MOM1 and PIAL2; sequence VNSPVTLISQ…EVVGSNSDCD (159 aa). The segment at 268-349 adopts an SP-RING-type zinc-finger fold; it reads SDCDIIEGPS…LRKILEEVGR (82 aa). Residues Cys-299, His-301, Cys-322, and Cys-325 each coordinate Zn(2+). Repeat copies occupy residues 569 to 591, 592 to 614, 615 to 637, 638 to 659, 660 to 682, 683 to 705, and 706 to 728. The interval 569–728 is 7 X 23 AA approximate tandem repeats; sequence QRPVPSYIAH…LPVSYGGTTD (160 aa).

This sequence belongs to the PIAL protein ligase family. Homodimer. Interacts with MOM1 and PIAL2 to form a high molecular mass complex which mediates transcriptional gene silencing at heterochromatin regions. As to expression, expressed in leaves, stems and flowers, and, at low levels, in siliques and old leaves.

It is found in the nucleus. The protein operates within protein modification; protein sumoylation. Together with MOM1 and PIAL2, regulates transcriptional gene silencing (TGS) independently of changes in DNA methylation. E4-type SUMO ligase that promotes SUMO chain formation in a SCE1-dependent manner and thus contributes to a pathway for proteolytic removal of sumoylation substrates. Involved in stress responses (e.g. osmotic, salt and abscisic acid ABA) and sulfur metabolism. This Arabidopsis thaliana (Mouse-ear cress) protein is E4 SUMO-protein ligase PIAL1.